The following is a 325-amino-acid chain: MVSAATRKSLLRARVMDFITSTAILPLLLGCVGLFSLFKLLQWLRMRAYVRNAVVVITGATSGLGRECARVFHAAGARLVLCGRNAEALEELSQELAASRAPGVQTHKPCTVTFDLADPGAIAGAASEILQCFGHVDVLINNAGISYRGAIVDTSPDVDKRVMETNYFGPVALTKALLPAMIRRRQGHVVAISSIQGKISLPFRSAYAASKHATQAFFDCLRAEVEQHDIEVTVISPGYIHTNLSLNAVTADGSKYGVMDETTAQGRSPVQVAQDILAALGKKKKDVVLADPMPSLAVYLRTLAPGLFFRLMASRARKERKSKHS.

Topologically, residues 1-17 (MVSAATRKSLLRARVMD) are cytoplasmic. A helical; Signal-anchor for type II membrane protein transmembrane segment spans residues 18-38 (FITSTAILPLLLGCVGLFSLF). Over 39–325 (KLLQWLRMRA…ARKERKSKHS (287 aa)) the chain is Lumenal. NAD(+) is bound by residues Ser62 and Leu64. Ser194 contributes to the substrate binding site. NAD(+)-binding residues include Tyr207, Lys211, and Thr242. Tyr207 acts as the Proton acceptor in catalysis.

This sequence belongs to the short-chain dehydrogenases/reductases (SDR) family.

The protein resides in the endoplasmic reticulum membrane. Functionally, putative oxidoreductase. This Bos taurus (Bovine) protein is Dehydrogenase/reductase SDR family member 7B (DHRS7B).